We begin with the raw amino-acid sequence, 607 residues long: MAVVTASSAGPSYAPEDPTLPKPWKGLVDGTTGFIYFWNPETNDTQYERPVPSSHAVSAPAHKSSVFVSSSVEKPSQGQRYDADGGHNRGSNNKIARSSSDRFHDGTSVHEGYGSLGVGSDISQESYCRRNEISVTGGDVPAPLTSFEATGFPSEIVREMHQAGFSAPTPIQAQSWPIALQGRDIVAIAKTGSGKTLGYLMPAFIHLQQRRKNPQLGPTILVLSPTRELATQIQAEAVKFGKSSRISCTCLYGGAPKGPQLRELSRGVDIVVATPGRLNDILEMRRVSLGQVSYLVLDEADRMLDMGFEPQIRKIVKEVPVQRQTLMYTATWPKGVRKIAADLLVNSVQVNIGNVDELVANKSITQHIEVVLPMEKQRRVEQILRSKEPGSKIIIFCSTKKMCDQLSRNLTRNFGAAAIHGDKSQGERDYVLSQFRAGRSPVLVATDVAARGLDIKDIRVVINYDFPTGIEDYVHRIGRTGRAGASGLAYTFFSDQDSKHALDLVKVLEGANQCVPTELRDMASRGGGMGRARNHWGSGPGGRGGRGGPYNSSYVGRNGGHGYDRGSRDSDRYGHGTYNADAPRKRSRSRSPNIGSGWSGKKSRFTD.

The span at 1–10 (MAVVTASSAG) shows a compositional bias: polar residues. 2 disordered regions span residues 1 to 25 (MAVVTASSAGPSYAPEDPTLPKPWK) and 66 to 108 (VFVS…DGTS). In terms of domain architecture, WW spans 18–52 (PTLPKPWKGLVDGTTGFIYFWNPETNDTQYERPVP). A compositionally biased stretch (polar residues) spans 89–98 (RGSNNKIARS). The span at 99-108 (SSDRFHDGTS) shows a compositional bias: basic and acidic residues. A Q motif motif is present at residues 145-173 (TSFEATGFPSEIVREMHQAGFSAPTPIQA). Residues 176–350 (WPIALQGRDI…ADLLVNSVQV (175 aa)) form the Helicase ATP-binding domain. 189 to 196 (AKTGSGKT) contacts ATP. The DEAD box motif lies at 298–301 (DEAD). The 145-residue stretch at 379 to 523 (RVEQILRSKE…CVPTELRDMA (145 aa)) folds into the Helicase C-terminal domain. The interval 519 to 607 (LRDMASRGGG…WSGKKSRFTD (89 aa)) is disordered. Positions 538–548 (SGPGGRGGRGG) are enriched in gly residues. Residues 562 to 574 (GYDRGSRDSDRYG) are compositionally biased toward basic and acidic residues.

Belongs to the DEAD box helicase family.

The enzyme catalyses ATP + H2O = ADP + phosphate + H(+). In Nicotiana sylvestris (Wood tobacco), this protein is ATP-dependent RNA helicase-like protein DB10.